The chain runs to 43 residues: Potassium channel toxin gamma-KTx 4.9 (43 aa).

4 disulfides stabilise this stretch: cysteine 5–cysteine 23, cysteine 11–cysteine 34, cysteine 20–cysteine 39, and cysteine 24–cysteine 41.

The protein belongs to the ergtoxin family. Gamma-KTx 4 subfamily. In terms of tissue distribution, expressed by the venom gland.

The protein localises to the secreted. Functionally, reversibly blocks Kv11/ERG potassium channels. This Centruroides sculpturatus (Arizona bark scorpion) protein is Potassium channel toxin gamma-KTx 4.9.